We begin with the raw amino-acid sequence, 214 residues long: tRNA (guanine-N(7)-)-methyltransferase (214 aa).

Residues glutamate 43, glutamate 68, aspartate 95, and aspartate 117 each contribute to the S-adenosyl-L-methionine site. Residue aspartate 117 is part of the active site. Residues lysine 121, aspartate 153, and 190–193 (TEYE) contribute to the substrate site.

Belongs to the class I-like SAM-binding methyltransferase superfamily. TrmB family.

The catalysed reaction is guanosine(46) in tRNA + S-adenosyl-L-methionine = N(7)-methylguanosine(46) in tRNA + S-adenosyl-L-homocysteine. It functions in the pathway tRNA modification; N(7)-methylguanine-tRNA biosynthesis. In terms of biological role, catalyzes the formation of N(7)-methylguanine at position 46 (m7G46) in tRNA. The polypeptide is tRNA (guanine-N(7)-)-methyltransferase (Staphylococcus aureus (strain COL)).